The sequence spans 170 residues: Photosystem I assembly protein Ycf3 (170 aa).

TPR repeat units lie at residues 35–68, 72–105, and 120–153; these read AFTY…EIDP, SYIL…NPFL, and GEQA…TPGN.

This sequence belongs to the Ycf3 family.

It localises to the plastid. Its subcellular location is the chloroplast thylakoid membrane. Functionally, essential for the assembly of the photosystem I (PSI) complex. May act as a chaperone-like factor to guide the assembly of the PSI subunits. In Agrostis stolonifera (Creeping bentgrass), this protein is Photosystem I assembly protein Ycf3.